The following is a 352-amino-acid chain: MNLSEFDYHLPDELIAQEALADRAASRMLVVHREQGRWEDRCFRDLPEFLRPGDCLVLNDSRVFPARLFGHRSGVHSLAVGKNNPKRHEFLSGAVEVFLLRAVSQDGRDWQALVRPGRKMRTGERIVFDEGLEAEIIARGEFGERTVRFLGSGDLYAAFDRIGHVPLPPYIKRDDSPADRERYQTVFAREKGSVAAPTAGLHFTPEVIERCQAAGADVATVTLHVGLGTFQPLHQEVVEEVKLHTEHYRITADNAGKIGAATRVVAVGTTSVRTLETAARDGVLEGETDIFLYPGVPFRRTGAMLTNFHLPRTSLLVLVSAFAGKDLMLAAYRHAVEARYRFYSYGDCMLIV.

Belongs to the QueA family. In terms of assembly, monomer.

The protein resides in the cytoplasm. It catalyses the reaction 7-aminomethyl-7-carbaguanosine(34) in tRNA + S-adenosyl-L-methionine = epoxyqueuosine(34) in tRNA + adenine + L-methionine + 2 H(+). The protein operates within tRNA modification; tRNA-queuosine biosynthesis. Transfers and isomerizes the ribose moiety from AdoMet to the 7-aminomethyl group of 7-deazaguanine (preQ1-tRNA) to give epoxyqueuosine (oQ-tRNA). The sequence is that of S-adenosylmethionine:tRNA ribosyltransferase-isomerase from Solibacter usitatus (strain Ellin6076).